The following is a 200-amino-acid chain: LHFPL tetraspan subfamily member 7 protein (200 aa).

4 helical membrane passes run 5–27 (VWVALGLSLTCTSAFSLISPAWF), 68–88 (VSAVMLLGGWLLLAFNAIFLL), 113–133 (AATAMIVGLLIFPIGLASPFI), and 150–170 (LGWGYMTAILNAVLASLLPII).

Belongs to the TMEM211 family.

It localises to the membrane. The polypeptide is LHFPL tetraspan subfamily member 7 protein (Homo sapiens (Human)).